The following is a 456-amino-acid chain: Phospholipase A1 member A (456 aa).

An N-terminal signal peptide occupies residues 1–25 (MPPGPWESCFWVGGLLLWLSVGSSG). Catalysis depends on Ser-166, which acts as the Nucleophile. The active-site Charge relay system is Asp-190. Cys-245 and Cys-258 are oxidised to a cystine. His-260 serves as the catalytic Charge relay system. Disulfide bonds link Cys-282/Cys-293 and Cys-296/Cys-304. Asn-365 is a glycosylation site (N-linked (GlcNAc...) asparagine).

This sequence belongs to the AB hydrolase superfamily. Lipase family.

It localises to the secreted. It catalyses the reaction a 1,2-diacyl-sn-glycero-3-phospho-L-serine + H2O = a 2-acyl-sn-glycero-3-phospho-L-serine + a fatty acid + H(+). The enzyme catalyses 1,2-di-(9Z)-octadecenoyl-sn-glycero-3-phospho-L-serine + H2O = 2-(9Z-octadecenoyl)-sn-glycero-3-phospho-L-serine + (9Z)-octadecenoate + H(+). It carries out the reaction 1-hexadecanoyl-2-(5Z,8Z,11Z,14Z-eicosatetraenoyl)-sn-glycero-3-phospho-L-serine + H2O = 2-(5Z,8Z,11Z,14Z)-eicosatetraenoyl-sn-glycero-3-phospho-L-serine + hexadecanoate + H(+). The catalysed reaction is a 1-acyl-sn-glycero-3-phospho-L-serine + H2O = sn-glycero-3-phospho-L-serine + a fatty acid + H(+). It catalyses the reaction 1-(9Z-octadecenoyl)-sn-glycero-3-phospho-L-serine + H2O = sn-glycero-3-phospho-L-serine + (9Z)-octadecenoate + H(+). Its function is as follows. Hydrolyzes the ester bond of the acyl group attached at the sn-1 position of phosphatidylserines (phospholipase A1 activity) and 1-acyl-2-lysophosphatidylserines (lysophospholipase activity) in the pathway of phosphatidylserines acyl chain remodeling. Cleaves phosphatidylserines exposed on the outer leaflet of the plasma membrane of apoptotic cells producing 2-acyl-1-lysophosphatidylserines, which in turn enhance mast cell activation and histamine production. Has no activity toward other glycerophospholipids including phosphatidylcholines, phosphatidylethanolamines, phosphatidic acids or phosphatidylinositols, or glycerolipids such as triolein. The chain is Phospholipase A1 member A (PLA1A) from Pongo abelii (Sumatran orangutan).